Here is a 279-residue protein sequence, read N- to C-terminus: Elongation factor Ts (279 aa).

The tract at residues 80-83 (TDFV) is involved in Mg(2+) ion dislocation from EF-Tu.

It belongs to the EF-Ts family.

Its subcellular location is the cytoplasm. Its function is as follows. Associates with the EF-Tu.GDP complex and induces the exchange of GDP to GTP. It remains bound to the aminoacyl-tRNA.EF-Tu.GTP complex up to the GTP hydrolysis stage on the ribosome. In Borreliella burgdorferi (strain ATCC 35210 / DSM 4680 / CIP 102532 / B31) (Borrelia burgdorferi), this protein is Elongation factor Ts (tsf).